Reading from the N-terminus, the 1387-residue chain is Kinesin-like protein KIF15-B (1387 aa).

The Kinesin motor domain occupies 26-364; that stretch reads AIKVFVRIRP…LQFAQRAKLI (339 aa). Residue 110 to 117 coordinates ATP; that stretch reads GQTGSGKT. The stretch at 369–1383 forms a coiled coil; the sequence is VVNEDTQGNV…NLFLKETKKC (1015 aa). The interval 1138 to 1387 is necessary for its targeting to microtubule minus ends; sequence NSPVVLAQTP…KETKKCEHCD (250 aa).

Belongs to the TRAFAC class myosin-kinesin ATPase superfamily. Kinesin family. KLP2 subfamily. In terms of assembly, homodimer. Dimerization is required for targeting to microtubule minus ends. Found in a complex with tpx2 and microtubules. Its association with microtubules and targeting to microtubule minus ends requires tpx2. In terms of tissue distribution, strongly expressed in testis and weakly in lung (at protein level).

Its subcellular location is the cytoplasm. It localises to the cytoskeleton. The protein localises to the microtubule organizing center. The protein resides in the centrosome. It is found in the spindle. Its subcellular location is the spindle pole. Its function is as follows. Plus-end directed kinesin-like motor enzyme involved in mitotic spindle assembly. Required for centrosome separation and maintenance of spindle bipolarity during mitosis. The protein is Kinesin-like protein KIF15-B (kif15-b) of Xenopus laevis (African clawed frog).